Reading from the N-terminus, the 474-residue chain is Ribulose bisphosphate carboxylase large chain (474 aa).

N6,N6,N6-trimethyllysine is present on lysine 13. The substrate site is built by asparagine 122 and threonine 172. The active-site Proton acceptor is lysine 174. Lysine 176 contributes to the substrate binding site. Mg(2+) contacts are provided by lysine 200, aspartate 202, and glutamate 203. The residue at position 200 (lysine 200) is an N6-carboxylysine. Histidine 293 (proton acceptor) is an active-site residue. Substrate is bound by residues arginine 294, histidine 326, and serine 378.

It belongs to the RuBisCO large chain family. Type I subfamily. As to quaternary structure, heterohexadecamer of 8 large chains and 8 small chains; disulfide-linked. The disulfide link is formed within the large subunit homodimers. Mg(2+) is required as a cofactor. Post-translationally, the disulfide bond which can form in the large chain dimeric partners within the hexadecamer appears to be associated with oxidative stress and protein turnover.

The protein resides in the plastid. The protein localises to the chloroplast. It carries out the reaction 2 (2R)-3-phosphoglycerate + 2 H(+) = D-ribulose 1,5-bisphosphate + CO2 + H2O. The catalysed reaction is D-ribulose 1,5-bisphosphate + O2 = 2-phosphoglycolate + (2R)-3-phosphoglycerate + 2 H(+). In terms of biological role, ruBisCO catalyzes two reactions: the carboxylation of D-ribulose 1,5-bisphosphate, the primary event in carbon dioxide fixation, as well as the oxidative fragmentation of the pentose substrate in the photorespiration process. Both reactions occur simultaneously and in competition at the same active site. The chain is Ribulose bisphosphate carboxylase large chain from Dendrophthora clavata (Columbian mistletoe).